The chain runs to 520 residues: 2-isopropylmalate synthase (520 aa).

The 263-residue stretch at 12–274 (IRIFDTTLRD…DSAINTPRIV (263 aa)) folds into the Pyruvate carboxyltransferase domain. Aspartate 21, histidine 209, histidine 211, and asparagine 245 together coordinate Mn(2+). Positions 396–520 (RLASMTISDV…VVAGKTAAVA (125 aa)) are regulatory domain.

The protein belongs to the alpha-IPM synthase/homocitrate synthase family. LeuA type 1 subfamily. As to quaternary structure, homodimer. The cofactor is Mn(2+).

It localises to the cytoplasm. The catalysed reaction is 3-methyl-2-oxobutanoate + acetyl-CoA + H2O = (2S)-2-isopropylmalate + CoA + H(+). The protein operates within amino-acid biosynthesis; L-leucine biosynthesis; L-leucine from 3-methyl-2-oxobutanoate: step 1/4. Its function is as follows. Catalyzes the condensation of the acetyl group of acetyl-CoA with 3-methyl-2-oxobutanoate (2-ketoisovalerate) to form 3-carboxy-3-hydroxy-4-methylpentanoate (2-isopropylmalate). This Xanthomonas euvesicatoria pv. vesicatoria (strain 85-10) (Xanthomonas campestris pv. vesicatoria) protein is 2-isopropylmalate synthase.